The sequence spans 263 residues: UPF0246 protein Strop_2927 (263 aa).

It belongs to the UPF0246 family.

This chain is UPF0246 protein Strop_2927, found in Salinispora tropica (strain ATCC BAA-916 / DSM 44818 / JCM 13857 / NBRC 105044 / CNB-440).